The following is a 409-amino-acid chain: Divalent metal cation transporter MntH (409 aa).

11 helical membrane passes run 19-39 (LSLM…GNFA), 46-66 (ASFG…AMLI), 98-118 (WVQA…GAAI), 122-142 (LLLG…TFLI), 155-175 (LVIG…LVFS), 196-216 (AVFL…IYLH), 241-261 (IAMT…AAAF), 290-310 (IFGL…TLAG), 320-340 (FYIP…IVIL), 348-368 (ILVM…VPLL), and 388-408 (ILGK…LVSL).

Belongs to the NRAMP family.

It is found in the cell inner membrane. Its function is as follows. H(+)-stimulated, divalent metal cation uptake system. The chain is Divalent metal cation transporter MntH from Yersinia enterocolitica serotype O:8 / biotype 1B (strain NCTC 13174 / 8081).